The chain runs to 439 residues: Iron-sulfur cluster assembly factor IBA57 homolog, mitochondrial (439 aa).

The transit peptide at Met-1 to Ala-72 directs the protein to the mitochondrion.

This sequence belongs to the GcvT family. CAF17/IBA57 subfamily.

It localises to the mitochondrion matrix. This is Iron-sulfur cluster assembly factor IBA57 homolog, mitochondrial (caf-17) from Neurospora crassa (strain ATCC 24698 / 74-OR23-1A / CBS 708.71 / DSM 1257 / FGSC 987).